The chain runs to 1143 residues: MEKRETFVQAVSKELVGEFLQFVQLDKEASDPFSLNELLDELSRKQKEELWQRLKNLLTDVLLESPVDGWQVVEAQGEDNMETEHGSKMRKSIEIIYAITSVILASVSVINESENYEALLECVIILNGILYALPESERKLQSSIQDLCVTWWEKGLPAKEDTGKTAFVMLLRRSLETKTGADVCRLWRIHQALYCFDYDLEESGEIKDMLLECFININYIKKEEGRRFLSCLFNWNINFIKMIHGTIKNQLQGLQKSLMVYIAEIYFRAWKKASGKILEAIENDCIQDFMFHGIHLPRRSPVHSKVREVLSYFHHQKKVRQGVEEMLYRLYKPILWRGLKARNSEVRSNAALLFVEAFPIRDPNLHAIEMDSEIQKQFEELYSLLEDPYPMVRSTGILGVCKITSKYWEMMPPTILIDLLKKVTGELAFDTSSADVRCSVFKCLPMILDNKLSHPLLEQLLPALRYSLHDNSEKVRVAFVDMLLKIKAVRAAKFWKICPMEHILVRLETDSRPVSRRLVSLIFNSFLPVNQPEEVWCERCVTLVQMNHAAARRFYQYAHEHTACTNIAKLIHVIRHCLNACIQRAVREPPEDEEEEDGREKENVTVLDKTLSVNDVACMAGLLEIIVILWKSIDRSMENNKEAKLYTINKFASVLPEYLKVFKDDRCKIPLFMLMSFMPASAVPPFSCGVISTLRSREEGAVDKSYCTLLDCLCSWGQVGHILELVDNWLPTEHAQAKSNTASKGRVQIHDTRPVKPELALVYIEYLLTHPKNRECLLSAPRKKLNHLLKALETSKADLESLLQTPGGKPRGFSEAAAPRAFGLHCRLSIHLQHKFCSEGKVYLSMLEDTGFWLESKILSFIQDQEEDYLKLHRVIYQQIIQTYLTVCKDVVMVGLGDHQFQMQLLQRSLGIMQTVKGFFYVSLLLDILKEITGSSLIQKTDSDEEVAMLLDTVQKVFQKMLECIARSFRKQPEEGLRLLYSVQRPLHEFITAVQSRHTDTPVHRGVLSTLIAGPVVEISHQLRKVSDVEELTPPEHLSDLPPFSRCLIGIIIKSSNVVRSFLDELKACVASNDIEGIVCLTAAVHIILVINAGKHKSSKVREVAATVHRKLKTFMEITLEEDSIERFLYESSSRTLGELLNS.

A Phosphoserine modification is found at serine 30. Residues 460–498 (LLPALRYSLHDNSEKVRVAFVDMLLKIKAVRAAKFWKIC) form an HEAT repeat. Phosphothreonine occurs at positions 805 and 1119.

As to quaternary structure, component of the condensin-2 complex, which contains the SMC2 and SMC4 heterodimer, and 3 non SMC subunits that probably regulate the complex: NCAPH2, NCAPD3 and NCAPG2.

The protein localises to the nucleus. In terms of biological role, regulatory subunit of the condensin-2 complex, a complex which establishes mitotic chromosome architecture and is involved in physical rigidity of the chromatid axis. In Homo sapiens (Human), this protein is Condensin-2 complex subunit G2 (NCAPG2).